A 109-amino-acid chain; its full sequence is Ribonuclease P protein component (109 aa).

This sequence belongs to the RnpA family. In terms of assembly, consists of a catalytic RNA component (M1 or rnpB) and a protein subunit.

The catalysed reaction is Endonucleolytic cleavage of RNA, removing 5'-extranucleotides from tRNA precursor.. Its function is as follows. RNaseP catalyzes the removal of the 5'-leader sequence from pre-tRNA to produce the mature 5'-terminus. It can also cleave other RNA substrates such as 4.5S RNA. The protein component plays an auxiliary but essential role in vivo by binding to the 5'-leader sequence and broadening the substrate specificity of the ribozyme. The sequence is that of Ribonuclease P protein component from Mycoplasma mycoides subsp. mycoides SC (strain CCUG 32753 / NCTC 10114 / PG1).